Here is a 383-residue protein sequence, read N- to C-terminus: PqqA peptide cyclase (383 aa).

Residues Pro-11–Ala-226 enclose the Radical SAM core domain. The [4Fe-4S] cluster site is built by Cys-25, Cys-29, and Cys-32.

The protein belongs to the radical SAM superfamily. PqqE family. Interacts with PqqD. The interaction is necessary for activity of PqqE. [4Fe-4S] cluster serves as cofactor.

It carries out the reaction [PQQ precursor protein] + S-adenosyl-L-methionine = E-Y cross-linked-[PQQ precursor protein] + 5'-deoxyadenosine + L-methionine + H(+). It functions in the pathway cofactor biosynthesis; pyrroloquinoline quinone biosynthesis. In terms of biological role, catalyzes the cross-linking of a glutamate residue and a tyrosine residue in the PqqA protein as part of the biosynthesis of pyrroloquinoline quinone (PQQ). The sequence is that of PqqA peptide cyclase from Azotobacter vinelandii (strain DJ / ATCC BAA-1303).